A 45-amino-acid chain; its full sequence is Small polypeptide DEVIL 2 (45 aa).

Residues 14–45 are required for DVL/RTFL small polypeptide activity; that stretch reads SQSRRLGKYLKEQKGRIYIIRRCVMMLLCSHD. The helical transmembrane segment at 17 to 33 threads the bilayer; that stretch reads RRLGKYLKEQKGRIYII.

The protein belongs to the DVL/RTFL small polypeptides family. In terms of tissue distribution, mostly expressed in stems and, to a lower extent, in roots and leaves.

It localises to the cell membrane. Functionally, small polypeptide acting as a regulatory molecule which coordinates cellular responses required for differentiation, growth and development, including leaves shape, pedicule elongation, inflorescence organization and fruit maturation, probably by restricting polar cell proliferation in lateral organs and coordinating socket cell recruitment and differentiation at trichome sites. The polypeptide is Small polypeptide DEVIL 2 (Arabidopsis thaliana (Mouse-ear cress)).